The primary structure comprises 358 residues: Protein-glutamate methylesterase/protein-glutamine glutaminase 2 (358 aa).

Positions 8-125 (RVLIVDDSAV…ARGLEGYAEE (118 aa)) constitute a Response regulatory domain. D59 is modified (4-aspartylphosphate). In terms of domain architecture, CheB-type methylesterase spans 157–352 (PMPGSALRFR…LDRVAERLLA (196 aa)). Active-site residues include S177, H203, and D299.

Belongs to the CheB family. In terms of processing, phosphorylated by CheA. Phosphorylation of the N-terminal regulatory domain activates the methylesterase activity.

The protein resides in the cytoplasm. The enzyme catalyses [protein]-L-glutamate 5-O-methyl ester + H2O = L-glutamyl-[protein] + methanol + H(+). It catalyses the reaction L-glutaminyl-[protein] + H2O = L-glutamyl-[protein] + NH4(+). Involved in chemotaxis. Part of a chemotaxis signal transduction system that modulates chemotaxis in response to various stimuli. Catalyzes the demethylation of specific methylglutamate residues introduced into the chemoreceptors (methyl-accepting chemotaxis proteins or MCP) by CheR. Also mediates the irreversible deamidation of specific glutamine residues to glutamic acid. This is Protein-glutamate methylesterase/protein-glutamine glutaminase 2 from Xanthomonas oryzae pv. oryzae (strain MAFF 311018).